The chain runs to 851 residues: Probable disease resistance protein At1g15890 (851 aa).

An NB-ARC domain is found at 139–441 (AEKIPAPKVE…CEGFIDGNED (303 aa)). 181–188 (GMGGVGKT) provides a ligand contact to ATP. LRR repeat units lie at residues 514-535 (SLRR…SNSP), 536-557 (NLST…FFRF), 560-582 (ALVV…ISKL), 584-605 (SLQY…FKEL), and 607-629 (KLIH…ATSL).

This sequence belongs to the disease resistance NB-LRR family.

Probable disease resistance protein. This is Probable disease resistance protein At1g15890 from Arabidopsis thaliana (Mouse-ear cress).